A 223-amino-acid chain; its full sequence is MTEPAAHFASHAAAARTLRIWDISPPLDERSEVFPGDTAYSQELHFSLSPGCPVNVNRITLSPHTGAHADAPLHYASGEAAIGAVDLQPYLGPCRVIHCLDCGPLVEPAHIAHALENLPPRVLLRTSRTASQSWASFTAIAPATLALLATKNIVLIGIDTPSVDPAASQNLPSHQQLLRHGLRVLENLVLDDVPEGDYELIALPLKLMRADASPVRAILRELS.

Substrate is bound at residue Phe-34. Positions 64, 68, and 70 each coordinate Zn(2+). His-74 functions as the Proton donor/acceptor in the catalytic mechanism. Positions 174 and 186 each coordinate Zn(2+).

The protein belongs to the Cyclase 1 superfamily. KynB family. As to quaternary structure, homodimer. Zn(2+) is required as a cofactor.

The enzyme catalyses N-formyl-L-kynurenine + H2O = L-kynurenine + formate + H(+). It participates in amino-acid degradation; L-tryptophan degradation via kynurenine pathway; L-kynurenine from L-tryptophan: step 2/2. Its function is as follows. Catalyzes the hydrolysis of N-formyl-L-kynurenine to L-kynurenine, the second step in the kynurenine pathway of tryptophan degradation. The sequence is that of Kynurenine formamidase from Polaromonas naphthalenivorans (strain CJ2).